Here is a 200-residue protein sequence, read N- to C-terminus: dITP/XTP pyrophosphatase (200 aa).

Thr-8 to Lys-13 is a binding site for substrate. Residue Asp-72 is the Proton acceptor of the active site. Asp-72 lines the Mg(2+) pocket. Residues Ser-73, Phe-155–Asp-158, Lys-178, and His-183–Arg-184 each bind substrate.

It belongs to the HAM1 NTPase family. Homodimer. The cofactor is Mg(2+).

It catalyses the reaction XTP + H2O = XMP + diphosphate + H(+). It carries out the reaction dITP + H2O = dIMP + diphosphate + H(+). The catalysed reaction is ITP + H2O = IMP + diphosphate + H(+). Its function is as follows. Pyrophosphatase that catalyzes the hydrolysis of nucleoside triphosphates to their monophosphate derivatives, with a high preference for the non-canonical purine nucleotides XTP (xanthosine triphosphate), dITP (deoxyinosine triphosphate) and ITP. Seems to function as a house-cleaning enzyme that removes non-canonical purine nucleotides from the nucleotide pool, thus preventing their incorporation into DNA/RNA and avoiding chromosomal lesions. This chain is dITP/XTP pyrophosphatase, found in Streptomyces avermitilis (strain ATCC 31267 / DSM 46492 / JCM 5070 / NBRC 14893 / NCIMB 12804 / NRRL 8165 / MA-4680).